The sequence spans 197 residues: Cell division protein SepF (197 aa).

Positions 15–91 are disordered; the sequence is DEEEVESPEE…PPSKSNGKNV (77 aa). Residues 22 to 31 show a composition bias toward basic and acidic residues; sequence PEERQRRVVQ. Low complexity predominate over residues 37 to 47; the sequence is TNNVQQNQPQQ. Polar residues-rich tracts occupy residues 48 to 58 and 78 to 91; these read SERSYSNQSKL and RMNQPPSKSNGKNV.

Belongs to the SepF family. As to quaternary structure, homodimer. Interacts with FtsZ.

It is found in the cytoplasm. Cell division protein that is part of the divisome complex and is recruited early to the Z-ring. Probably stimulates Z-ring formation, perhaps through the cross-linking of FtsZ protofilaments. Its function overlaps with FtsA. This Staphylococcus haemolyticus (strain JCSC1435) protein is Cell division protein SepF.